The following is a 175-amino-acid chain: Crossover junction endodeoxyribonuclease RuvC (175 aa).

Active-site residues include Asp-8, Glu-67, and Asp-139. Positions 8, 67, and 139 each coordinate Mg(2+).

Belongs to the RuvC family. Homodimer which binds Holliday junction (HJ) DNA. The HJ becomes 2-fold symmetrical on binding to RuvC with unstacked arms; it has a different conformation from HJ DNA in complex with RuvA. In the full resolvosome a probable DNA-RuvA(4)-RuvB(12)-RuvC(2) complex forms which resolves the HJ. It depends on Mg(2+) as a cofactor.

The protein localises to the cytoplasm. It catalyses the reaction Endonucleolytic cleavage at a junction such as a reciprocal single-stranded crossover between two homologous DNA duplexes (Holliday junction).. Functionally, the RuvA-RuvB-RuvC complex processes Holliday junction (HJ) DNA during genetic recombination and DNA repair. Endonuclease that resolves HJ intermediates. Cleaves cruciform DNA by making single-stranded nicks across the HJ at symmetrical positions within the homologous arms, yielding a 5'-phosphate and a 3'-hydroxyl group; requires a central core of homology in the junction. The consensus cleavage sequence is 5'-(A/T)TT(C/G)-3'. Cleavage occurs on the 3'-side of the TT dinucleotide at the point of strand exchange. HJ branch migration catalyzed by RuvA-RuvB allows RuvC to scan DNA until it finds its consensus sequence, where it cleaves and resolves the cruciform DNA. The chain is Crossover junction endodeoxyribonuclease RuvC from Marinobacter nauticus (strain ATCC 700491 / DSM 11845 / VT8) (Marinobacter aquaeolei).